A 345-amino-acid chain; its full sequence is CCAAT/enhancer-binding protein beta (345 aa).

The interval 1–24 is required for Lys-174 sumoylation; the sequence is MQRLVAWDPACLPLPPPPPAFKSM. Arg-3 bears the Asymmetric dimethylarginine; by CARM1 mark. The segment at 24 to 135 is required for MYC transcriptional repression; it reads MEVANFYYEA…YGGKNCKKPA (112 aa). Lys-43 bears the N6-acetyllysine; alternate mark. An N6-methylated lysine; alternate modification is found at Lys-43. Disordered stretches follow at residues 46 to 67 and 79 to 116; these read PAAP…GSIG and LEPL…QHHD. Over residues 47-59 the composition is skewed to pro residues; sequence AAPPAARPGPRPP. Low complexity predominate over residues 84 to 100; it reads APQAPAPATATDTFEAA. The 9aaTAD motif lies at 116 to 124; it reads DFLSDLFSD. 2 positions are modified to N6-acetyllysine; by KAT2A and KAT2B: Lys-129 and Lys-132. The residue at position 133 (Lys-133) is an N6-acetyllysine; by KAT2A and KAT2B; alternate. A Glycyl lysine isopeptide (Lys-Gly) (interchain with G-Cter in SUMO2); alternate cross-link involves residue Lys-133. Residues 157–178 form a disordered region; it reads FAPLHPPPPPPPPPAELKAEPG. Residues 160–171 are compositionally biased toward pro residues; sequence LHPPPPPPPPPA. Residue Lys-174 forms a Glycyl lysine isopeptide (Lys-Gly) (interchain with G-Cter in SUMO2); alternate linkage. Residue Lys-174 forms a Glycyl lysine isopeptide (Lys-Gly) (interchain with G-Cter in SUMO); alternate linkage. Glycyl lysine isopeptide (Lys-Gly) (interchain with G-Cter in SUMO2) cross-links involve residues Lys-185 and Lys-187. The segment covering 218–232 has biased composition (low complexity); it reads SGSSGSLSTSSSSSP. The disordered stretch occupies residues 218–271; the sequence is SGSSGSLSTSSSSSPPGTPSPADAKAPPTACYAGAAPAPSQVKSKAKKTVDKHS. At Thr-226 the chain carries Phosphothreonine; by GSK3-beta. 2 O-linked (GlcNAc) serine glycosylation sites follow: Ser-227 and Ser-228. At Ser-231 the chain carries Phosphoserine; by GSK3-beta. Thr-235 is subject to Phosphothreonine; by RPS6KA1, CDK2 and MAPK. Residues Lys-260 and Lys-262 each participate in a glycyl lysine isopeptide (Lys-Gly) (interchain with G-Cter in SUMO2) cross-link. Residue Thr-266 is modified to Phosphothreonine; by RPS6KA1 and PKC/PRKCA. The region spanning 271–334 is the bZIP domain; the sequence is SDEYKIRRER…STLRNLFKQL (64 aa). The tract at residues 275–295 is basic motif; the sequence is KIRRERNNIAVRKSRDKAKMR. Residue Ser-288 is modified to Phosphoserine; by PKC/PRKCA. The leucine-zipper stretch occupies residues 297–304; that stretch reads LETQHKVL. Ser-325 carries the phosphoserine; by CaMK2 modification. Lys-332 is covalently cross-linked (Glycyl lysine isopeptide (Lys-Gly) (interchain with G-Cter in SUMO2)).

This sequence belongs to the bZIP family. C/EBP subfamily. In terms of assembly, binds DNA as a homodimer and as a heterodimer. Interacts with ATF4. Binds DNA as a heterodimer with ATF4. Interacts with MYB; within the complex, MYB and CEBPB bind to different promoter regions. Can form stable heterodimers with CEBPD. Can form stable heterodimers with CEBPA and CEBPE. Interacts with SIX1. Isoform 2 and isoform 3 also form heterodimers. Interacts with TRIM28 and PTGES2. Interacts with PRDM16. Interacts with CCDC85B. Forms a complex with THOC5. Interacts with ZNF638; this interaction increases transcriptional activation. Interacts with CIDEA and CIDEC; these interactions increase transcriptional activation of a subset of CEBPB downstream target genes. Interacts with DDIT3/CHOP. Interacts with EP300; recruits EP300 to chromatin. Interacts with RORA; the interaction disrupts interaction with EP300. Interacts (not methylated) with MED23, MED26, SMARCA2, SMARCB1 and SMARCC1. Interacts with KAT2A and KAT2B. Interacts with ATF5; EP300 is required for ATF5 and CEBPB interaction and DNA binding. Interacts with NFE2L1; the heterodimer represses expression of DSPP during odontoblast differentiation. In terms of processing, methylated. Methylation at Arg-3 by CARM1 and at Lys-43 by EHMT2 inhibit transactivation activity. Methylation is probably inhibited by phosphorylation at Thr-235. Post-translationally, sumoylated by polymeric chains of SUMO2 or SUMO3. Sumoylation at Lys-174 is required for inhibition of T-cells proliferation. In adipocytes, sumoylation at Lys-174 by PIAS1 leads to ubiquitination and subsequent proteasomal degradation. Desumoylated by SENP2, which abolishes ubiquitination and stabilizes protein levels. Ubiquitinated, leading to proteasomal degradation. In terms of processing, phosphorylated at Thr-235 by MAPK and CDK2, serves to prime phosphorylation at Thr-226 and Ser-231 by GSK3B and acquire DNA-binding as well as transactivation activities, required to induce adipogenesis. MAPK and CDK2 act sequentially to maintain Thr-235 in the primed phosphorylated state during mitotical cloning expansion and thereby progression of terminal differentiation. Phosphorylation at Thr-266 enhances transactivation activity. Phosphorylation at Ser-325 in response to calcium increases transactivation activity. Phosphorylated at Thr-235 by RPS6KA1. Post-translationally, O-glycosylated, glycosylation at Ser-227 and Ser-228 prevents phosphorylation on Thr-235, Ser-231 and Thr-226 and DNA binding activity which delays the adipocyte differentiation program. Acetylated. Acetylation at Lys-43 is an important and dynamic regulatory event that contributes to its ability to transactivate target genes, including those associated with adipogenesis and adipocyte function. Deacetylation by HDAC1 represses its transactivation activity. Acetylated by KAT2A and KAT2B within a cluster of lysine residues between amino acids 129-133, this acetylation is strongly induced by glucocorticoid treatment and enhances transactivation activity. As to expression, expressed at low levels in the lung, kidney and spleen.

The protein localises to the nucleus. It is found in the cytoplasm. Functionally, important transcription factor regulating the expression of genes involved in immune and inflammatory responses. Also plays a significant role in adipogenesis, as well as in the gluconeogenic pathway, liver regeneration, and hematopoiesis. The consensus recognition site is 5'-T[TG]NNGNAA[TG]-3'. Its functional capacity is governed by protein interactions and post-translational protein modifications. During early embryogenesis, plays essential and redundant roles with CEBPA. Has a promitotic effect on many cell types such as hepatocytes and adipocytes but has an antiproliferative effect on T-cells by repressing MYC expression, facilitating differentiation along the T-helper 2 lineage. Binds to regulatory regions of several acute-phase and cytokines genes and plays a role in the regulation of acute-phase reaction and inflammation. Also plays a role in intracellular bacteria killing. During adipogenesis, is rapidly expressed and, after activation by phosphorylation, induces CEBPA and PPARG, which turn on the series of adipocyte genes that give rise to the adipocyte phenotype. The delayed transactivation of the CEBPA and PPARG genes by CEBPB appears necessary to allow mitotic clonal expansion and thereby progression of terminal differentiation. Essential for female reproduction because of a critical role in ovarian follicle development. Restricts osteoclastogenesis: together with NFE2L1; represses expression of DSPP during odontoblast differentiation. Essential for gene expression induction in activated macrophages. Plays a major role in immune responses such as CD4(+) T-cell response, granuloma formation and endotoxin shock. Not essential for intracellular bacteria killing. In terms of biological role, acts as a dominant negative through heterodimerization with isoform 2. Promotes osteoblast differentiation and osteoclastogenesis. In Homo sapiens (Human), this protein is CCAAT/enhancer-binding protein beta.